The sequence spans 263 residues: 4-hydroxy-tetrahydrodipicolinate reductase (263 aa).

Residues Gly7–Met12 and Asp33 each bind NAD(+). Arg34 provides a ligand contact to NADP(+). NAD(+) is bound by residues Gly96–Thr98 and Ala120–Met123. His153 serves as the catalytic Proton donor/acceptor. Residue His154 coordinates (S)-2,3,4,5-tetrahydrodipicolinate. Residue Lys157 is the Proton donor of the active site. Residue Gly163 to Thr164 participates in (S)-2,3,4,5-tetrahydrodipicolinate binding.

It belongs to the DapB family.

It localises to the cytoplasm. It catalyses the reaction (S)-2,3,4,5-tetrahydrodipicolinate + NAD(+) + H2O = (2S,4S)-4-hydroxy-2,3,4,5-tetrahydrodipicolinate + NADH + H(+). The catalysed reaction is (S)-2,3,4,5-tetrahydrodipicolinate + NADP(+) + H2O = (2S,4S)-4-hydroxy-2,3,4,5-tetrahydrodipicolinate + NADPH + H(+). It participates in amino-acid biosynthesis; L-lysine biosynthesis via DAP pathway; (S)-tetrahydrodipicolinate from L-aspartate: step 4/4. In terms of biological role, catalyzes the conversion of 4-hydroxy-tetrahydrodipicolinate (HTPA) to tetrahydrodipicolinate. The sequence is that of 4-hydroxy-tetrahydrodipicolinate reductase from Ralstonia nicotianae (strain ATCC BAA-1114 / GMI1000) (Ralstonia solanacearum).